Reading from the N-terminus, the 250-residue chain is Low affinity immunoglobulin gamma Fc region receptor III-A (250 aa).

A signal peptide spans 1 to 20 (MWRLLSPTALLLLVSAGTRA). At 21–207 (ADLSKAMVVL…TSTFLPHWYQ (187 aa)) the chain is on the extracellular side. 2 Ig-like C2-type domains span residues 32–105 (PEWN…LEVH) and 120–189 (EGDT…VNIT). Cystine bridges form between Cys-47-Cys-89 and Cys-128-Cys-172. Asn-63, Asn-133, Asn-180, and Asn-187 each carry an N-linked (GlcNAc...) asparagine glycan. A helical membrane pass occupies residues 208–228 (IAFFLVTALLFVVDTGLHVAV). The Cytoplasmic segment spans residues 229-250 (QRDLQSSVKEWKDGKVTWSHGP).

Forms a heterooligomeric complex with ITAM-containing signaling subunits FCER1G. Interacts (via transmembrane domain) with signaling subunits; this interaction is a prerequisite for receptor complex expression on the cell surface and intracellular signal transduction. Binds the Fc region of antigen-complexed IgG.

Its subcellular location is the cell membrane. Receptor for the invariable Fc fragment of immunoglobulin gamma (IgG). Optimally activated upon binding of clustered antigen-IgG complexes displayed on cell surfaces, triggers lysis of antibody-coated cells, a process known as antibody-dependent cellular cytotoxicity (ADCC). Does not bind free monomeric IgG, thus avoiding inappropriate effector cell activation in the absence of antigenic trigger. Mediates IgG effector functions on natural killer (NK) cells. Binds antigen-IgG complexes generated upon infection and triggers NK cell-dependent cytokine production and degranulation to limit viral load and propagation. Fc-binding subunit that associates with FCER1G adapter to form functional signaling complexes. Following the engagement of antigen-IgG complexes, triggers phosphorylation of immunoreceptor tyrosine-based activation motif (ITAM)-containing adapter with subsequent activation of phosphatidylinositol 3-kinase signaling and sustained elevation of intracellular calcium that ultimately drive NK cell activation. Mediates enhanced ADCC in response to afucosylated IgGs. The chain is Low affinity immunoglobulin gamma Fc region receptor III-A from Felis catus (Cat).